We begin with the raw amino-acid sequence, 193 residues long: Ribosomal RNA large subunit methyltransferase E (193 aa).

5 residues coordinate S-adenosyl-L-methionine: G48, F50, D67, N85, and D107. The active-site Proton acceptor is K147.

Belongs to the class I-like SAM-binding methyltransferase superfamily. RNA methyltransferase RlmE family.

The protein localises to the cytoplasm. It carries out the reaction uridine(2552) in 23S rRNA + S-adenosyl-L-methionine = 2'-O-methyluridine(2552) in 23S rRNA + S-adenosyl-L-homocysteine + H(+). In terms of biological role, specifically methylates the uridine in position 2552 of 23S rRNA at the 2'-O position of the ribose in the fully assembled 50S ribosomal subunit. The protein is Ribosomal RNA large subunit methyltransferase E of Borrelia duttonii (strain Ly).